Here is a 451-residue protein sequence, read N- to C-terminus: NADH-quinone oxidoreductase subunit H (451 aa).

The next 9 membrane-spanning stretches (helical) occupy residues Leu-30–Ile-50, Ala-98–Ile-118, Leu-138–Leu-158, Ala-176–Tyr-196, Trp-213–Thr-233, Leu-262–Phe-282, Trp-302–Leu-322, Gln-336–Ile-356, and Val-368–Val-388.

This sequence belongs to the complex I subunit 1 family. In terms of assembly, NDH-1 is composed of 14 different subunits. Subunits NuoA, H, J, K, L, M, N constitute the membrane sector of the complex.

Its subcellular location is the cell membrane. The catalysed reaction is a quinone + NADH + 5 H(+)(in) = a quinol + NAD(+) + 4 H(+)(out). Functionally, NDH-1 shuttles electrons from NADH, via FMN and iron-sulfur (Fe-S) centers, to quinones in the respiratory chain. The immediate electron acceptor for the enzyme in this species is believed to be ubiquinone. Couples the redox reaction to proton translocation (for every two electrons transferred, four hydrogen ions are translocated across the cytoplasmic membrane), and thus conserves the redox energy in a proton gradient. This subunit may bind ubiquinone. This chain is NADH-quinone oxidoreductase subunit H, found in Acidothermus cellulolyticus (strain ATCC 43068 / DSM 8971 / 11B).